The primary structure comprises 273 residues: 2,3,4,5-tetrahydropyridine-2,6-dicarboxylate N-succinyltransferase (273 aa).

Substrate is bound by residues Arg104 and Asp141.

Belongs to the transferase hexapeptide repeat family. Homotrimer.

The protein localises to the cytoplasm. It catalyses the reaction (S)-2,3,4,5-tetrahydrodipicolinate + succinyl-CoA + H2O = (S)-2-succinylamino-6-oxoheptanedioate + CoA. Its pathway is amino-acid biosynthesis; L-lysine biosynthesis via DAP pathway; LL-2,6-diaminopimelate from (S)-tetrahydrodipicolinate (succinylase route): step 1/3. The sequence is that of 2,3,4,5-tetrahydropyridine-2,6-dicarboxylate N-succinyltransferase from Neisseria gonorrhoeae (strain ATCC 700825 / FA 1090).